The chain runs to 207 residues: Large ribosomal subunit protein uL3 (207 aa).

The protein belongs to the universal ribosomal protein uL3 family. Part of the 50S ribosomal subunit. Forms a cluster with proteins L14 and L19.

Its function is as follows. One of the primary rRNA binding proteins, it binds directly near the 3'-end of the 23S rRNA, where it nucleates assembly of the 50S subunit. The chain is Large ribosomal subunit protein uL3 from Thermotoga maritima (strain ATCC 43589 / DSM 3109 / JCM 10099 / NBRC 100826 / MSB8).